The primary structure comprises 498 residues: 3-octaprenyl-4-hydroxybenzoate carboxy-lyase (498 aa).

Asparagine 176 lines the Mn(2+) pocket. Residues 179 to 181, 193 to 195, and 198 to 199 each bind prenylated FMN; these read IYR, RWL, and RG. Glutamate 242 lines the Mn(2+) pocket. Catalysis depends on aspartate 291, which acts as the Proton donor.

It belongs to the UbiD family. Homohexamer. Requires prenylated FMN as cofactor. It depends on Mn(2+) as a cofactor.

It is found in the cell membrane. It catalyses the reaction a 4-hydroxy-3-(all-trans-polyprenyl)benzoate + H(+) = a 2-(all-trans-polyprenyl)phenol + CO2. Its pathway is cofactor biosynthesis; ubiquinone biosynthesis. Catalyzes the decarboxylation of 3-octaprenyl-4-hydroxy benzoate to 2-octaprenylphenol, an intermediate step in ubiquinone biosynthesis. The sequence is that of 3-octaprenyl-4-hydroxybenzoate carboxy-lyase from Escherichia coli O6:K15:H31 (strain 536 / UPEC).